Consider the following 160-residue polypeptide: Crossover junction endodeoxyribonuclease RuvC (160 aa).

Residues Asp-9, Glu-68, and Asp-141 contribute to the active site. 3 residues coordinate Mg(2+): Asp-9, Glu-68, and Asp-141.

It belongs to the RuvC family. In terms of assembly, homodimer which binds Holliday junction (HJ) DNA. The HJ becomes 2-fold symmetrical on binding to RuvC with unstacked arms; it has a different conformation from HJ DNA in complex with RuvA. In the full resolvosome a probable DNA-RuvA(4)-RuvB(12)-RuvC(2) complex forms which resolves the HJ. Mg(2+) is required as a cofactor.

The protein resides in the cytoplasm. It carries out the reaction Endonucleolytic cleavage at a junction such as a reciprocal single-stranded crossover between two homologous DNA duplexes (Holliday junction).. The RuvA-RuvB-RuvC complex processes Holliday junction (HJ) DNA during genetic recombination and DNA repair. Endonuclease that resolves HJ intermediates. Cleaves cruciform DNA by making single-stranded nicks across the HJ at symmetrical positions within the homologous arms, yielding a 5'-phosphate and a 3'-hydroxyl group; requires a central core of homology in the junction. The consensus cleavage sequence is 5'-(A/T)TT(C/G)-3'. Cleavage occurs on the 3'-side of the TT dinucleotide at the point of strand exchange. HJ branch migration catalyzed by RuvA-RuvB allows RuvC to scan DNA until it finds its consensus sequence, where it cleaves and resolves the cruciform DNA. The protein is Crossover junction endodeoxyribonuclease RuvC of Campylobacter jejuni (strain RM1221).